Reading from the N-terminus, the 2611-residue chain is Highly reducing polyketide synthase ATEG_07659 (2611 aa).

A Ketosynthase family 3 (KS3) domain is found at 10 to 409 (SEPIAIIGLS…GTNSHVIVEG (400 aa)). Catalysis depends on for beta-ketoacyl synthase activity residues C157, H292, and H330. The segment at 537–844 (MVFTGQGAQW…VRFVEAFTDM (308 aa)) is malonyl-CoA:ACP transacylase (MAT) domain. Positions 969–1109 (HDLLGVLVPG…GLITVQMAAD (141 aa)) are N-terminal hotdog fold. Residues 969 to 1292 (HDLLGVLVPG…CQSLGRSAPG (324 aa)) enclose the PKS/mFAS DH domain. Residues 970 to 1289 (DLLGVLVPGT…GLVCQSLGRS (320 aa)) are dehydratase (DH) domain. H1001 functions as the Proton acceptor; for dehydratase activity in the catalytic mechanism. A C-terminal hotdog fold region spans residues 1128–1292 (GYTRRIDPQD…CQSLGRSAPG (165 aa)). The active-site Proton donor; for dehydratase activity is D1199. Positions 1469 to 1602 (FGQLKSLLAA…GATLLLMETT (134 aa)) are methyltransferase (CMet) domain. Positions 1898–2213 (GLLDTLAFGD…TGKHLGKLVL (316 aa)) are enoyl reductase (ER) domain. The tract at residues 2236 to 2416 (ASYLLVGGVG…AVSLDMGVIK (181 aa)) is ketoreductase (KR) domain. Positions 2499 to 2509 (SRAQAQQAGGD) are enriched in low complexity. A disordered region spans residues 2499–2520 (SRAQAQQAGGDSDSEPLSAKLR). A Carrier domain is found at 2527–2604 (AAARCVGDAI…ALALDVVAKS (78 aa)). Position 2564 is an O-(pantetheine 4'-phosphoryl)serine (S2564).

It participates in secondary metabolite biosynthesis. Functionally, highly reducing polyketide synthase; part of the cluster B that mediates the biosynthesis of azasperpyranones, members of the azaphilone family that exhibit anti-cancer activities. Azasperpyranones are synthesized by 2 clusters, A and B. Cluster A is responsible for the production of the polyhydric phenol moiety while the azaphilonoid scaffold is produced by the cluster B. The non-reducing polyketide synthase ATEG_03629 produces 5-methyl orsellinic acid, which is then reduced to 5-methyl orsellinic aldehyde by the NRPS-like protein ATEG_03630. 5-methyl orsellinic aldehyde is then first hydroxylated by the FAD-dependent monooxygenase ATEG_03635 and subsequently hydroxylated by the cytochrome P450 monooxygenase ATEG_03631 to produce the unstable polyhydric phenol precursor of azasperpyranones. On the other hand, the polyketide synthase ATEG_07659 is responsible for producing the 3,5-dimethyloctadienone moiety from acetyl-CoA, three malonyl-CoA, and two S-adenosyl methionines (SAM). The 3,5-dimethyloctadienone moiety is then loaded onto the SAT domain of ATEG_07661 and extended with four malonyl-CoA and one SAM, which leads to the formation of 2,4-dihydroxy-6-(5,7-dimethyl-2-oxo-trans-3-trans-5-nonadienyl)-3-methylbenzaldehyde (compound 8) after reductive release and aldol condensation. The FAD-dependent monooxygenase ATEG_07662 is the next enzyme in the biosynthesis sequence and hydroxylates the side chain at the benzylic position of compound 8. In Aspergillus nidulans, afoF, the ortholog of the FAD-dependent oxygenase ATEG_07660, is the key enzyme for the biosynthesis of asperfuranone by catalyzing the hydroxylation at C-8 of to prevent the formation of a six-membered ring hemiacetal intermediate and thus facilitating the formation of a five-membered ring to produce asperfuranone. In Aspergillus terreus, ATEG_07660 is probably not functional, which leads to the formation of the six-membered ring hemiacetal intermediate presperpyranone instead of asperfuranone. Finally, ATEG_03636 is involved in the condensation of the polyhydric phenol moiety produced by cluster A and the perasperpyranone precursor produced by cluster B, to yield azasperpyranone A. Further modifications of azasperpyranone A result in the production of derivatives, including azasperpyranone B to F. This chain is Highly reducing polyketide synthase ATEG_07659, found in Aspergillus terreus (strain NIH 2624 / FGSC A1156).